Reading from the N-terminus, the 71-residue chain is Guanine nucleotide-binding protein G(I)/G(S)/G(O) subunit gamma-2 (71 aa).

At Ala-2 the chain carries N-acetylalanine. Residue Cys-68 is modified to Cysteine methyl ester. Residue Cys-68 is the site of S-geranylgeranyl cysteine attachment. The propeptide at 69-71 is removed in mature form; the sequence is AIL.

Belongs to the G protein gamma family. As to quaternary structure, g proteins are composed of 3 units, alpha, beta and gamma. In this context, interacts with GNB2. The heterodimer formed by GNB1 and GNG2 interacts with ARHGEF5. The heterodimer formed by GNB1 and GNG2 interacts with GRK2. Component of the TAS2R14-GNAI1 complex, consisting of TAS2R14, GNAI1, GNB1 and GNG2. Forms complexes with TAS2R14 and G-proteins; these complexes play a role in the perception of bitterness. Component of the TAS2R14-GNAT3 complex, consisting of TAS2R14, GNAT3, GNB1 and GNG2. Component of the TAS2R14-GNAS2 complex, consisting of TAS2R14, GNAS2, GNB1 and GNG2. Adrenal gland and brain.

It localises to the cell membrane. Guanine nucleotide-binding proteins (G proteins) are involved as a modulator or transducer in various transmembrane signaling systems. The beta and gamma chains are required for the GTPase activity, for replacement of GDP by GTP, and for G protein-effector interaction. The protein is Guanine nucleotide-binding protein G(I)/G(S)/G(O) subunit gamma-2 (GNG2) of Bos taurus (Bovine).